Reading from the N-terminus, the 84-residue chain is Small ribosomal subunit protein bS18B (84 aa).

It belongs to the bacterial ribosomal protein bS18 family. As to quaternary structure, part of the 30S ribosomal subunit. Forms a tight heterodimer with protein bS6.

Binds as a heterodimer with protein bS6 to the central domain of the 16S rRNA, where it helps stabilize the platform of the 30S subunit. The chain is Small ribosomal subunit protein bS18B from Mycolicibacterium smegmatis (strain ATCC 700084 / mc(2)155) (Mycobacterium smegmatis).